A 129-amino-acid chain; its full sequence is Trefoil factor 2 (129 aa).

Residues 1–23 form the signal peptide; that stretch reads MGPRGLQLLAVLLALGLCAPAGA. Residue Q24 is modified to Pyrrolidone carboxylic acid. P-type domains follow at residues 29-73 and 79-122; these read CQCS…FHPL and EQCV…FFPI. 7 disulfide bridges follow: C29–C127, C31–C58, C42–C57, C52–C69, C81–C107, C91–C106, and C101–C118.

The protein localises to the secreted. Inhibits gastrointestinal motility and gastric acid secretion. Could function as a structural component of gastric mucus, possibly by stabilizing glycoproteins in the mucus gel through interactions with carbohydrate side chains. The chain is Trefoil factor 2 (TFF2) from Canis lupus familiaris (Dog).